We begin with the raw amino-acid sequence, 352 residues long: CRISPR-associated endonuclease Cas1 1 (352 aa).

Residues glutamate 207, histidine 274, and glutamate 289 each contribute to the Mn(2+) site.

It belongs to the CRISPR-associated endonuclease Cas1 family. Homodimer, forms a heterotetramer with a Cas2 homodimer. It depends on Mg(2+) as a cofactor. The cofactor is Mn(2+).

Functionally, CRISPR (clustered regularly interspaced short palindromic repeat), is an adaptive immune system that provides protection against mobile genetic elements (viruses, transposable elements and conjugative plasmids). CRISPR clusters contain spacers, sequences complementary to antecedent mobile elements, and target invading nucleic acids. CRISPR clusters are transcribed and processed into CRISPR RNA (crRNA). Acts as a dsDNA endonuclease. Involved in the integration of spacer DNA into the CRISPR cassette. The chain is CRISPR-associated endonuclease Cas1 1 from Saccharolobus solfataricus (strain ATCC 35092 / DSM 1617 / JCM 11322 / P2) (Sulfolobus solfataricus).